Here is a 224-residue protein sequence, read N- to C-terminus: Orotidine 5'-phosphate decarboxylase (224 aa).

Substrate is bound by residues aspartate 10, lysine 32, 59–68 (DLKLHDIPNT), threonine 115, arginine 175, glutamine 184, glycine 204, and arginine 205. Residue lysine 61 is the Proton donor of the active site.

The protein belongs to the OMP decarboxylase family. Type 1 subfamily. Homodimer.

The catalysed reaction is orotidine 5'-phosphate + H(+) = UMP + CO2. It functions in the pathway pyrimidine metabolism; UMP biosynthesis via de novo pathway; UMP from orotate: step 2/2. Its function is as follows. Catalyzes the decarboxylation of orotidine 5'-monophosphate (OMP) to uridine 5'-monophosphate (UMP). The polypeptide is Orotidine 5'-phosphate decarboxylase (Novosphingobium aromaticivorans (strain ATCC 700278 / DSM 12444 / CCUG 56034 / CIP 105152 / NBRC 16084 / F199)).